The primary structure comprises 623 residues: MSVANTTAASQDACYISLLGLAEYFRTSQPPNIKKCIQCLQALFTFQPPSKVEARTHLQMGQVLMAYTCNIDLARRHLEQAWSISEPLMNFDDVKFDTASLLAQLHLKTEQSPHAKAMLRRAVELSQNNVYWHCKLLLQLSQIHANDREYSLASDLLAVGAESAEEAGATYLKVLFLLSRAMILMIERKTNDVLALLNSAGQIIDNNIPNPHQKEYLKVFFLVLQVCYYLALGQVKTVKPSLKQLQMSIQTIMAPNWPSDESIFGGNQLEMFVWLPKEQLYVLVYLVTVSHSMMAGYMDKAQKYTEKALTQIEKLKLQEDKSILSVFKVILLEHIVMCRMVMGNRELAIREIAAARDVCLAVPHRSLLKRHSAQLHCLIGLYSMSTSFFEHAERQFLVCVNETGERDLKLFANLNLAIIYLRTKRDADLKQILDAVSTENTHTYSSQALMGGFYYVQGLHAFHKNSFHEAKRFLRETLKMANAEDLNRLTSCSLVLLSHVFLSIGNSKESMNMVTPAMQLASKIPDIHVQLWGSAILKDLHRMSKDVQHEKEAYANHVKYSENLIADQRKCVQSAHHELVNWFQGDPPLTSGASLTHLPVAAAAPEASTSSLQASTAQFGQFY.

TPR repeat units lie at residues 96 to 129, 451 to 484, and 491 to 524; these read FDTA…SQNN, GGFY…ANAE, and SCSL…ASKI.

It belongs to the SCC4/mau-2 family. Interacts with Nipped-B to form the cohesin loading complex.

The protein localises to the nucleus. It is found in the nucleoplasm. Its function is as follows. Required for association of the cohesin complex with chromatin during interphase. Plays a role in sister chromatid cohesion and normal progression through prometaphase. This chain is MAU2 chromatid cohesion factor homolog, found in Drosophila grimshawi (Hawaiian fruit fly).